The sequence spans 582 residues: MLLQRCPVLIRSPTAILGKMIKTHQFLIGIGRCPILATQGTTCSQIHLKATKAGGDSPSWAKSHCPFMLLELQDGKSKIVQKAAPEVQEDVKTFKTDLPISLASTSLRKPFFSPQEPEKNSEKVTHLIQNNMAGNHVFGYDQFFRNKIMEKKQDHTYRVFKTVNRWADAYPFAEHFFEASVASKDVSVWCSNDYLGMSRHPRVLQATQETLQRHGAGAGGTRNISGTSRFHVELEQELAELHQKDSALLFSSCFVANDSTLFTLAKILPGCEIYSDAGNHASMIQGIRNSGAAKFVFRHNDPDHLKKLLKKSNPETPKIVAFETVHSMDGAICPLEELCDVAHQYGALTFVDEVHAVGLYGSRGAGIGERDGIMHKIDIISGTLGKAFGCVGGYIASTRDLVDMVRSYAAGFIFTTSLPPMVLSGALESVRLLKGEEGQALRRAHQRNVKHMRQLLMDRGLPVIPCPSHIIPIRVGDAALNSRICDLLLSKHGIYVQAINYPTVPRGEELLRLAPSPHHSPQMMEDFVEKLLAAWTEVGLPLQDVSIAACNFCRRPVHFELMSEWERSYFGNMGPQYVTTYA.

The N-terminal 44 residues, 1 to 44 (MLLQRCPVLIRSPTAILGKMIKTHQFLIGIGRCPILATQGTTCS), are a transit peptide targeting the mitochondrion. Succinyl-CoA is bound at residue R158. Pyridoxal 5'-phosphate-binding residues include C253 and F254. 2 residues coordinate succinyl-CoA: S275 and K294. S327, H355, and T383 together coordinate pyridoxal 5'-phosphate. The active site involves K386. Position 386 is an N6-(pyridoxal phosphate)lysine (K386). T415 and T416 together coordinate pyridoxal 5'-phosphate. Residue T503 participates in succinyl-CoA binding.

Belongs to the class-II pyridoxal-phosphate-dependent aminotransferase family. In terms of assembly, homodimer. Pyridoxal 5'-phosphate serves as cofactor.

Its subcellular location is the mitochondrion inner membrane. The enzyme catalyses succinyl-CoA + glycine + H(+) = 5-aminolevulinate + CO2 + CoA. It functions in the pathway porphyrin-containing compound metabolism; protoporphyrin-IX biosynthesis; 5-aminolevulinate from glycine: step 1/1. Its function is as follows. Catalyzes the pyridoxal 5'-phosphate (PLP)-dependent condensation of succinyl-CoA and glycine to form aminolevulinic acid (ALA), with CoA and CO2 as by-products. Contributes significantly to heme formation during erythropoiesis. The polypeptide is 5-aminolevulinate synthase, erythroid-specific, mitochondrial (ALAS2) (Delphinapterus leucas (Beluga whale)).